Reading from the N-terminus, the 172-residue chain is Spermidine/spermine N(1)-acetyltransferase (172 aa).

The N-acetyltransferase domain occupies 3-172 (VKMKKCSRED…TDLIMAKTLI (170 aa)). Acetyl-CoA contacts are provided by residues 96–98 (IYI), 105–109 (HGLGK), and 135–137 (NEN). Tyr142 serves as the catalytic Proton donor. Lys144 lines the acetyl-CoA pocket.

It belongs to the acetyltransferase family. Monomer.

It catalyses the reaction an alkane-alpha,omega-diamine + acetyl-CoA = an N-acetylalkane-alpha,omega-diamine + CoA + H(+). Involved in the protection against polyamine toxicity by regulating their concentration. Could also be involved in the negative control of sporulation as well as production of degradative enzymes such as alpha-amylase, levansucrase and alkaline phosphatase. Catalyzes the transfer of an acetyl group from acetyl coenzyme A (AcCoA) to an acceptor substrate and releases both CoA and the acetylated product. It possesses N1-acetyltransferase activity toward polyamine substrates including spermidine, spermine, aminopropylcadaverine, norspermidine, homospermidine, N(8)-acetylspermidine, diaminopropane and agmatine. The protein is Spermidine/spermine N(1)-acetyltransferase of Bacillus subtilis (strain 168).